The following is a 486-amino-acid chain: Vesicular GABA transporter (486 aa).

Over 1–93 (MASNRFQNLQ…EASEPISALQ (93 aa)) the chain is Cytoplasmic. Positions 29-46 (LNEVPSYQNQPQTGESGS) are enriched in polar residues. The tract at residues 29–85 (LNEVPSYQNQPQTGESGSNPPPHDRLEPIQESVVSEQPQKDDINKQEEAKDDGHGEA) is disordered. The segment covering 66–85 (PQKDDINKQEEAKDDGHGEA) has biased composition (basic and acidic residues). Residues 94-114 (AAWNVTNAIQGMFIVGLPIAV) form a helical membrane-spanning segment. Residues 115 to 119 (KVGGW) are Lumenal, vesicle-facing. A helical membrane pass occupies residues 120–140 (WSIGAMVGVAYVCYWTGVLLI). Residues 141 to 167 (ECLYENGVKKRKTYREIADFYKPGFGK) lie on the Cytoplasmic side of the membrane. The helical transmembrane segment at 168–188 (WVLAAQLTELLSTCIIYLVLA) threads the bilayer. Topologically, residues 189 to 203 (ADLLQSCFPSVDKAG) are lumenal, vesicle. Residues 204–224 (WMMITSASLLTCSFLDDLQIV) form a helical membrane-spanning segment. The Cytoplasmic segment spans residues 225-228 (SRLS). Residues 229–249 (FFNAISHLIVNLIMVLYCLSF) form a helical membrane-spanning segment. The Lumenal, vesicle portion of the chain corresponds to 250-263 (VSQWSFSTITFSLN). The helical transmembrane segment at 264 to 284 (INTLPTIVGMVVFGYTSHIFL) threads the bilayer. Over 285–305 (PNLEGNMKNPAQFNVMLKWSH) the chain is Cytoplasmic. A helical membrane pass occupies residues 306–326 (IAAAVFKVVFGMLGFLTFGEL). The Lumenal, vesicle portion of the chain corresponds to 327 to 341 (TQEEISNSLPNQSFK). A glycan (N-linked (GlcNAc...) asparagine) is linked at Asn337. Residues 342–362 (ILVNLILVVKALLSYPLPFYA) traverse the membrane as a helical segment. Residues 363-398 (AVQLLKNNLFLGYPQTPFTSCYSPDKSLREWAVTLR) lie on the Cytoplasmic side of the membrane. The chain crosses the membrane as a helical span at residues 399 to 419 (IILVLFTLFVALSVPYLVELM). At 420-421 (GL) the chain is on the lumenal, vesicle side. Residues 422–442 (VGNITGTMLSFIWPALFHLYI) form a helical membrane-spanning segment. The Cytoplasmic portion of the chain corresponds to 443–457 (KEKTLNNFEKRFDQG). The chain crosses the membrane as a helical span at residues 458–478 (IIIMGCSVCISGVYFSSMELL). The Lumenal, vesicle portion of the chain corresponds to 479-486 (RAINSADS).

Belongs to the amino acid/polyamine transporter 2 family.

It is found in the cytoplasmic vesicle membrane. In terms of biological role, involved in the uptake of GABA into the synaptic vesicles. The chain is Vesicular GABA transporter (unc-47) from Caenorhabditis elegans.